We begin with the raw amino-acid sequence, 535 residues long: Light-independent protochlorophyllide reductase subunit B (535 aa).

[4Fe-4S] cluster is bound at residue D36. D287 serves as the catalytic Proton donor. Substrate is bound at residue 422–423 (GL).

It belongs to the ChlB/BchB/BchZ family. Protochlorophyllide reductase is composed of three subunits; BchL, BchN and BchB. Forms a heterotetramer of two BchB and two BchN subunits. [4Fe-4S] cluster serves as cofactor.

The catalysed reaction is chlorophyllide a + oxidized 2[4Fe-4S]-[ferredoxin] + 2 ADP + 2 phosphate = protochlorophyllide a + reduced 2[4Fe-4S]-[ferredoxin] + 2 ATP + 2 H2O. It functions in the pathway porphyrin-containing compound metabolism; bacteriochlorophyll biosynthesis (light-independent). Component of the dark-operative protochlorophyllide reductase (DPOR) that uses Mg-ATP and reduced ferredoxin to reduce ring D of protochlorophyllide (Pchlide) to form chlorophyllide a (Chlide). This reaction is light-independent. The NB-protein (BchN-BchB) is the catalytic component of the complex. This Rhodopseudomonas palustris (strain BisB5) protein is Light-independent protochlorophyllide reductase subunit B.